A 313-amino-acid polypeptide reads, in one-letter code: Probable GTP 3',8-cyclase (313 aa).

The Radical SAM core domain maps to arginine 4 to arginine 224. Residue arginine 13 coordinates GTP. 3 residues coordinate [4Fe-4S] cluster: cysteine 20, cysteine 24, and cysteine 27. Lysine 60 lines the GTP pocket. Glycine 64 is a binding site for S-adenosyl-L-methionine. Threonine 90 is a GTP binding site. Serine 114 is an S-adenosyl-L-methionine binding site. Lysine 151 serves as a coordination point for GTP. The [4Fe-4S] cluster site is built by cysteine 244 and cysteine 247. Position 249–251 (arginine 249–arginine 251) interacts with GTP. Cysteine 261 contacts [4Fe-4S] cluster.

Belongs to the radical SAM superfamily. MoaA family. The cofactor is [4Fe-4S] cluster.

It carries out the reaction GTP + AH2 + S-adenosyl-L-methionine = (8S)-3',8-cyclo-7,8-dihydroguanosine 5'-triphosphate + 5'-deoxyadenosine + L-methionine + A + H(+). Its pathway is cofactor biosynthesis; molybdopterin biosynthesis. In terms of biological role, catalyzes the cyclization of GTP to (8S)-3',8-cyclo-7,8-dihydroguanosine 5'-triphosphate. This chain is Probable GTP 3',8-cyclase, found in Sulfurisphaera tokodaii (strain DSM 16993 / JCM 10545 / NBRC 100140 / 7) (Sulfolobus tokodaii).